We begin with the raw amino-acid sequence, 262 residues long: 14-3-3-like protein B (262 aa).

It belongs to the 14-3-3 family.

The sequence is that of 14-3-3-like protein B from Hordeum vulgare (Barley).